A 116-amino-acid chain; its full sequence is Large ribosomal subunit protein bL20 (116 aa).

The protein belongs to the bacterial ribosomal protein bL20 family.

Its function is as follows. Binds directly to 23S ribosomal RNA and is necessary for the in vitro assembly process of the 50S ribosomal subunit. It is not involved in the protein synthesizing functions of that subunit. The chain is Large ribosomal subunit protein bL20 from Helicobacter acinonychis (strain Sheeba).